The following is a 289-amino-acid chain: Energy-coupling factor transporter ATP-binding protein EcfA2 (289 aa).

The 244-residue stretch at 3–246 folds into the ABC transporter domain; sequence IRFKQVDFTY…TQWLKEKQLG (244 aa). Residue 40-47 participates in ATP binding; sequence GHTGSGKS.

Belongs to the ABC transporter superfamily. Energy-coupling factor EcfA family. As to quaternary structure, forms a stable energy-coupling factor (ECF) transporter complex composed of 2 membrane-embedded substrate-binding proteins (S component), 2 ATP-binding proteins (A component) and 2 transmembrane proteins (T component).

Its subcellular location is the cell membrane. ATP-binding (A) component of a common energy-coupling factor (ECF) ABC-transporter complex. Unlike classic ABC transporters this ECF transporter provides the energy necessary to transport a number of different substrates. The sequence is that of Energy-coupling factor transporter ATP-binding protein EcfA2 from Enterococcus faecalis (strain ATCC 700802 / V583).